Consider the following 83-residue polypeptide: Cytochrome b559 subunit alpha (83 aa).

Residues 21-35 form a helical membrane-spanning segment; the sequence is VIHSITIPSLFIAGW. Histidine 23 is a binding site for heme.

Belongs to the PsbE/PsbF family. In terms of assembly, heterodimer of an alpha subunit and a beta subunit. PSII is composed of 1 copy each of membrane proteins PsbA, PsbB, PsbC, PsbD, PsbE, PsbF, PsbH, PsbI, PsbJ, PsbK, PsbL, PsbM, PsbT, PsbX, PsbY, PsbZ, Psb30/Ycf12, at least 3 peripheral proteins of the oxygen-evolving complex and a large number of cofactors. It forms dimeric complexes. It depends on heme b as a cofactor.

It localises to the plastid. The protein localises to the chloroplast thylakoid membrane. Functionally, this b-type cytochrome is tightly associated with the reaction center of photosystem II (PSII). PSII is a light-driven water:plastoquinone oxidoreductase that uses light energy to abstract electrons from H(2)O, generating O(2) and a proton gradient subsequently used for ATP formation. It consists of a core antenna complex that captures photons, and an electron transfer chain that converts photonic excitation into a charge separation. The protein is Cytochrome b559 subunit alpha of Phalaenopsis aphrodite subsp. formosana (Moth orchid).